Reading from the N-terminus, the 398-residue chain is Ribosomal RNA large subunit methyltransferase I (398 aa).

Residues 2–79 (SVRLVLAKGR…LSESIDIAFF (78 aa)) form the PUA domain.

It belongs to the methyltransferase superfamily. RlmI family.

It is found in the cytoplasm. It catalyses the reaction cytidine(1962) in 23S rRNA + S-adenosyl-L-methionine = 5-methylcytidine(1962) in 23S rRNA + S-adenosyl-L-homocysteine + H(+). Its function is as follows. Specifically methylates the cytosine at position 1962 (m5C1962) of 23S rRNA. The polypeptide is Ribosomal RNA large subunit methyltransferase I (Shigella dysenteriae serotype 1 (strain Sd197)).